A 180-amino-acid chain; its full sequence is ATP synthase subunit delta (180 aa).

Belongs to the ATPase delta chain family. In terms of assembly, F-type ATPases have 2 components, F(1) - the catalytic core - and F(0) - the membrane proton channel. F(1) has five subunits: alpha(3), beta(3), gamma(1), delta(1), epsilon(1). F(0) has three main subunits: a(1), b(2) and c(10-14). The alpha and beta chains form an alternating ring which encloses part of the gamma chain. F(1) is attached to F(0) by a central stalk formed by the gamma and epsilon chains, while a peripheral stalk is formed by the delta and b chains.

Its subcellular location is the cell inner membrane. Its function is as follows. F(1)F(0) ATP synthase produces ATP from ADP in the presence of a proton or sodium gradient. F-type ATPases consist of two structural domains, F(1) containing the extramembraneous catalytic core and F(0) containing the membrane proton channel, linked together by a central stalk and a peripheral stalk. During catalysis, ATP synthesis in the catalytic domain of F(1) is coupled via a rotary mechanism of the central stalk subunits to proton translocation. In terms of biological role, this protein is part of the stalk that links CF(0) to CF(1). It either transmits conformational changes from CF(0) to CF(1) or is implicated in proton conduction. The chain is ATP synthase subunit delta from Pelobacter propionicus (strain DSM 2379 / NBRC 103807 / OttBd1).